We begin with the raw amino-acid sequence, 95 residues long: Small ribosomal subunit protein uS17 (95 aa).

This sequence belongs to the universal ribosomal protein uS17 family. As to quaternary structure, part of the 30S ribosomal subunit.

One of the primary rRNA binding proteins, it binds specifically to the 5'-end of 16S ribosomal RNA. The chain is Small ribosomal subunit protein uS17 from Streptomyces coelicolor (strain ATCC BAA-471 / A3(2) / M145).